We begin with the raw amino-acid sequence, 231 residues long: Uracil-DNA glycosylase (231 aa).

The Proton acceptor role is filled by aspartate 74.

This sequence belongs to the uracil-DNA glycosylase (UDG) superfamily. UNG family.

It localises to the cytoplasm. The enzyme catalyses Hydrolyzes single-stranded DNA or mismatched double-stranded DNA and polynucleotides, releasing free uracil.. Its function is as follows. Excises uracil residues from the DNA which can arise as a result of misincorporation of dUMP residues by DNA polymerase or due to deamination of cytosine. In Campylobacter jejuni subsp. jejuni serotype O:6 (strain 81116 / NCTC 11828), this protein is Uracil-DNA glycosylase.